The sequence spans 293 residues: uncharacterized protein (293 aa).

One can recognise an HTH lysR-type domain in the interval 1–58 (MDLRRFITLKTVVEEGSFLRASQKLCCTQSTVTFHIQQLEQEFSVQLFEKIGRRMCLT). A DNA-binding region (H-T-H motif) is located at residues 18–37 (FLRASQKLCCTQSTVTFHIQ).

This sequence belongs to the LysR transcriptional regulatory family.

This is an uncharacterized protein from Escherichia coli (strain K12).